The primary structure comprises 245 residues: Type III pantothenate kinase (245 aa).

6–13 (DVGNTAMK) is a binding site for ATP. Residues Tyr93 and 100 to 103 (GVDR) each bind substrate. The active-site Proton acceptor is Asp102. Asp121 is a K(+) binding site. Ser124 provides a ligand contact to ATP. A substrate-binding site is contributed by Thr175.

This sequence belongs to the type III pantothenate kinase family. Homodimer. The cofactor is NH4(+). Requires K(+) as cofactor.

It localises to the cytoplasm. The catalysed reaction is (R)-pantothenate + ATP = (R)-4'-phosphopantothenate + ADP + H(+). It participates in cofactor biosynthesis; coenzyme A biosynthesis; CoA from (R)-pantothenate: step 1/5. In terms of biological role, catalyzes the phosphorylation of pantothenate (Pan), the first step in CoA biosynthesis. The polypeptide is Type III pantothenate kinase (Alcanivorax borkumensis (strain ATCC 700651 / DSM 11573 / NCIMB 13689 / SK2)).